Reading from the N-terminus, the 184-residue chain is TRAF-interacting protein with FHA domain-containing protein A (184 aa).

Thr9 is subject to Phosphothreonine. The 57-residue stretch at 47–103 folds into the FHA domain; sequence VKFGRNSNMCQYTFQDKQVSRIQFVLQPFKQFNSSVLSFEIKNMSKKTSLMVDNQEL. The interval 152–184 is disordered; sequence NNWPTQNPIPEDGMYSSYFTHRSSPSEMDENEL. Polar residues predominate over residues 168 to 177; the sequence is SYFTHRSSPS.

It belongs to the TIFA family. As to quaternary structure, homooligomer; homooligomerizes following phosphorylation at Thr-9. Interacts with IRAK1, TRAF2 and TRAF6. Interacts with TIFAB; binding to TIFAB inhibits TRAF6 activation, possibly by inducing a conformational change in TIFA. Interacts with ZCCHC11; binding to ZCCHC11 suppresses the TRAF6-dependent activation of NF-kappa-B. In terms of processing, phosphorylated at Thr-9 following detection of ADP-D-glycero-beta-D-manno-heptose (ADP-Heptose) by ALPK1. Phosphorylation at Thr-9 by ALPK1 leads to the formation of an intermolecular binding between the FHA domain and phosphorylated Thr-9, promoting TIFA oligomerization and TIFA-mediated NF-kappa-B activation. As to expression, highly expressed in the spleen and at lower levels in heart, brain, lung, liver, kidney and testes.

The protein localises to the cytoplasm. Its function is as follows. Adapter molecule that plays a key role in the activation of pro-inflammatory NF-kappa-B signaling following detection of bacterial pathogen-associated molecular pattern metabolites (PAMPs). Promotes activation of an innate immune response by inducing the oligomerization and polyubiquitination of TRAF6, which leads to the activation of TAK1 and IKK through a proteasome-independent mechanism. TIFA-dependent innate immune response is triggered by ADP-D-glycero-beta-D-manno-heptose (ADP-Heptose), a potent PAMP present in all Gram-negative and some Gram-positive bacteria: ADP-Heptose is recognized by ALPK1, which phosphorylates TIFA at Thr-9, leading to TIFA homooligomerization and subsequent activation of pro-inflammatory NF-kappa-B signaling. The polypeptide is TRAF-interacting protein with FHA domain-containing protein A (Mus musculus (Mouse)).